The primary structure comprises 146 residues: uncharacterized protein (146 aa).

This is an uncharacterized protein from Haemophilus influenzae (strain ATCC 51907 / DSM 11121 / KW20 / Rd).